A 759-amino-acid polypeptide reads, in one-letter code: 1,4-alpha-glucan branching enzyme GlgB (759 aa).

A disordered region spans residues 1 to 22 (MAKTKGLPKDTAVTPSPHLRPH). Aspartate 422 functions as the Nucleophile in the catalytic mechanism. Glutamate 475 (proton donor) is an active-site residue.

Belongs to the glycosyl hydrolase 13 family. GlgB subfamily. Monomer.

The catalysed reaction is Transfers a segment of a (1-&gt;4)-alpha-D-glucan chain to a primary hydroxy group in a similar glucan chain.. Its pathway is glycan biosynthesis; glycogen biosynthesis. Functionally, catalyzes the formation of the alpha-1,6-glucosidic linkages in glycogen by scission of a 1,4-alpha-linked oligosaccharide from growing alpha-1,4-glucan chains and the subsequent attachment of the oligosaccharide to the alpha-1,6 position. The polypeptide is 1,4-alpha-glucan branching enzyme GlgB (Mycobacterium sp. (strain KMS)).